A 213-amino-acid chain; its full sequence is Redox-sensing transcriptional repressor Rex (213 aa).

Positions 18 to 57 (LYYRIFKRFHAEKIERANSKQIAEAIGIDSATVRRDFSYF) form a DNA-binding region, H-T-H motif. Position 92 to 97 (92 to 97 (GIGNMG)) interacts with NAD(+).

It belongs to the transcriptional regulatory Rex family. As to quaternary structure, homodimer.

It localises to the cytoplasm. Modulates transcription in response to changes in cellular NADH/NAD(+) redox state. Binds to the promoter of the aldehyde-alcohol dehydrogenase adhE gene. Functions as a redox-dependent repressor of adhE expression. The chain is Redox-sensing transcriptional repressor Rex from Streptococcus pneumoniae serotype 19F (strain G54).